The chain runs to 179 residues: ATP synthase subunit delta (179 aa).

This sequence belongs to the ATPase delta chain family. In terms of assembly, F-type ATPases have 2 components, F(1) - the catalytic core - and F(0) - the membrane proton channel. F(1) has five subunits: alpha(3), beta(3), gamma(1), delta(1), epsilon(1). F(0) has three main subunits: a(1), b(2) and c(10-14). The alpha and beta chains form an alternating ring which encloses part of the gamma chain. F(1) is attached to F(0) by a central stalk formed by the gamma and epsilon chains, while a peripheral stalk is formed by the delta and b chains.

The protein resides in the cell inner membrane. F(1)F(0) ATP synthase produces ATP from ADP in the presence of a proton or sodium gradient. F-type ATPases consist of two structural domains, F(1) containing the extramembraneous catalytic core and F(0) containing the membrane proton channel, linked together by a central stalk and a peripheral stalk. During catalysis, ATP synthesis in the catalytic domain of F(1) is coupled via a rotary mechanism of the central stalk subunits to proton translocation. In terms of biological role, this protein is part of the stalk that links CF(0) to CF(1). It either transmits conformational changes from CF(0) to CF(1) or is implicated in proton conduction. This chain is ATP synthase subunit delta, found in Paraburkholderia xenovorans (strain LB400).